The sequence spans 445 residues: MKHSLPVKDTIIIGFMLFALFFGAGNMIYPPELGQAAGHNVWKAIGGFLLTGVGLPLLGIIAIALTGKDAKGLADKAHPVFGTIFTVVLYLSIGPLFAIPRTGTVSYEIGAVPFLTGVPERLSLLIFTLIFFGVTYYLALNPSKVVDRVGKILTPIKFTIILIIVLKAIFTPMGGLGAVTEAYKGTPVFKGFLEGYKTMDALASIVFGVVVVNAVKSKGVTQSKALAAACIKAGVIAALGLTFIYVSLAYLGATSTNAIGPVGEGAKILSASSHYLFGSLGNIVLGAAITVACLTTSIGLVTSCGQYFSKLIPALSYKIVVTIVTLFSLIIANFGLAQIIAFSVPILSAIYPLAIVIIVLSFIDKIFKERREVYIACLIGTGLFSILDGIKAAGFSLGSLDVFLNANLPLYSLGIGWVLPGIVGAVIGYVLTLFIGPSKQLNEIS.

12 helical membrane passes run 11–31 (IIIG…IYPP), 45–65 (IGGF…AIAL), 79–99 (PVFG…LFAI), 122–142 (LSLL…ALNP), 158–178 (FTII…GLGA), 192–212 (FLEG…VVVV), 233–253 (AGVI…YLGA), 275–295 (YLFG…ACLT), 311–331 (LIPA…SLII), 339–359 (IIAF…VIIV), 375–395 (IACL…AAGF), and 415–435 (IGWV…TLFI).

It belongs to the branched chain amino acid transporter family.

The protein resides in the cell membrane. In terms of biological role, branched-chain amino acid transport system which is involved in the uptake of isoleucine, valine and probably leucine. Together with BcaP and BrnQ, plays an important role in the activation of CodY, a branched-chain amino acid-responsive transcriptional regulator that controls the expression of several dozen transcription units in B.subtilis. The protein is Branched-chain amino acid permease BraB of Bacillus subtilis (strain 168).